The sequence spans 1055 residues: Ephrin type-B receptor 2 (1055 aa).

The N-terminal stretch at 1 to 18 (MALRRLGAALLLLPLLAA) is a signal peptide. The Extracellular segment spans residues 19–543 (VEETLMDSTT…QTSIQEKLPL (525 aa)). One can recognise an Eph LBD domain in the interval 20–202 (EETLMDSTTA…FYRKCPRIIQ (183 aa)). Intrachain disulfides connect C62–C184 and C97–C107. 4 N-linked (GlcNAc...) asparagine glycosylation sites follow: N265, N336, N428, and N482. Fibronectin type-III domains lie at 324-434 (IPSA…TNQA) and 435-530 (APSA…TMTE). A helical membrane pass occupies residues 544–564 (IIGSSAAGLVFLIAVVVIAIV). The Cytoplasmic segment spans residues 565–1055 (CNRRGFERAD…KESNDCSCGG (491 aa)). One can recognise a Protein kinase domain in the interval 621–884 (VKIEQVIGAG…QIVNTLDKMI (264 aa)). ATP contacts are provided by residues 627–635 (IGAGEFGEV) and K653. Catalysis depends on D746, which acts as the Proton acceptor. A Glycyl lysine isopeptide (Lys-Gly) (interchain with G-Cter in ubiquitin) cross-link involves residue K891. One can recognise an SAM domain in the interval 913 to 977 (TSFNTVDEWL…LNSIQVMRAQ (65 aa)). 2 positions are modified to phosphoserine: S983 and V984. The PDZ-binding (in isoform 2) motif lies at 984 to 986 (VEG). The segment at 990 to 1055 (ARRPRATGRT…KESNDCSCGG (66 aa)) is disordered. Over residues 991 to 1002 (RRPRATGRTKRC) the composition is skewed to basic residues. Residues 1025-1049 (KKTDPGRGREIQGIFFKEDSHKESN) show a composition bias toward basic and acidic residues.

It belongs to the protein kinase superfamily. Tyr protein kinase family. Ephrin receptor subfamily. In terms of assembly, heterotetramer upon binding of the ligand. The heterotetramer is composed of an ephrin dimer and a receptor dimer. Interacts (via PDZ-binding motif) with GRIP1 and PICK1 (via PDZ domain). Interacts with ARHGEF15; mediates ARHGEF15 phosphorylation, ubiquitination and degradation by the proteasome. Interacts with AQP1; involved in endolymph production in the inner ear. Interacts with SPSB1 and SPSB4. The phosphorylated form interacts with RASA1 (via SH2 domain 1). Interacts with EFNA5. Interacts with SH2D3C. In terms of processing, autophosphorylated; ligand binding stimulates autophosphorylation on tyrosine residues. Polyubiquitinated; ligand binding stimulates ubiquitination. Ubiquitinated by RNF186 at Lys-891, mainly through 'Lys-27'-linked polyubiquitin chains. Ubiquitinated by CRL2(KLHDC2) E3 ligase complex. Post-translationally, ligand binding induces cleavage by matrix metalloproteinases (MMPs) such as MMP7/MMP9, producing an EphB2/N-terminal fragment (NTF) and a C-terminal long fragment (EphB2-LF). EphB2-LF is further cleaved by MMPs, producing EphB2/CTF1 which is further cleaved by the PS1/gamma-secretase producing EphB2/CTF2. In terms of tissue distribution, brain, heart, lung, kidney, placenta, pancreas, liver and skeletal muscle. Preferentially expressed in fetal brain.

The protein resides in the cell membrane. It is found in the cell projection. Its subcellular location is the axon. It localises to the dendrite. It catalyses the reaction L-tyrosyl-[protein] + ATP = O-phospho-L-tyrosyl-[protein] + ADP + H(+). In terms of biological role, receptor tyrosine kinase which binds promiscuously transmembrane ephrin-B family ligands residing on adjacent cells, leading to contact-dependent bidirectional signaling into neighboring cells. The signaling pathway downstream of the receptor is referred to as forward signaling while the signaling pathway downstream of the ephrin ligand is referred to as reverse signaling. Functions in axon guidance during development. Involved in the guidance of commissural axons, that form a major interhemispheric connection between the 2 temporal lobes of the cerebral cortex. Also involved in guidance of contralateral inner ear efferent growth cones at the midline and of retinal ganglion cell axons to the optic disk. In addition to axon guidance, also regulates dendritic spines development and maturation and stimulates the formation of excitatory synapses. Upon activation by EFNB1, abolishes the ARHGEF15-mediated negative regulation on excitatory synapse formation. Controls other aspects of development including angiogenesis, palate development and in inner ear development through regulation of endolymph production. Forward and reverse signaling through the EFNB2/EPHB2 complex regulate movement and adhesion of cells that tubularize the urethra and septate the cloaca. May function as a tumor suppressor. May be involved in the regulation of platelet activation and blood coagulation. This Homo sapiens (Human) protein is Ephrin type-B receptor 2 (EPHB2).